Consider the following 300-residue polypeptide: GTPase Era (300 aa).

The Era-type G domain occupies 8–176 (RCGYVAIVGR…EGLIAKHLPE (169 aa)). Residues 16-23 (GRPNVGKS) are G1. 16–23 (GRPNVGKS) serves as a coordination point for GTP. Positions 42–46 (QTTRH) are G2. The G3 stretch occupies residues 63–66 (DTPG). Residues 63-67 (DTPGM) and 125-128 (NKTD) contribute to the GTP site. A G4 region spans residues 125–128 (NKTD). Positions 155 to 157 (VSA) are G5. Positions 199 to 283 (VREKIMRQLG…MLNLWVKVKG (85 aa)) constitute a KH type-2 domain.

It belongs to the TRAFAC class TrmE-Era-EngA-EngB-Septin-like GTPase superfamily. Era GTPase family. As to quaternary structure, monomer.

The protein localises to the cytoplasm. Its subcellular location is the cell inner membrane. Its function is as follows. An essential GTPase that binds both GDP and GTP, with rapid nucleotide exchange. Plays a role in 16S rRNA processing and 30S ribosomal subunit biogenesis and possibly also in cell cycle regulation and energy metabolism. This is GTPase Era from Pseudomonas fluorescens (strain ATCC BAA-477 / NRRL B-23932 / Pf-5).